Here is a 252-residue protein sequence, read N- to C-terminus: Ubiquinone/menaquinone biosynthesis C-methyltransferase UbiE (252 aa).

S-adenosyl-L-methionine-binding positions include Thr-71, Asp-100, 124 to 125 (DA), and Ser-141.

This sequence belongs to the class I-like SAM-binding methyltransferase superfamily. MenG/UbiE family.

It carries out the reaction a 2-demethylmenaquinol + S-adenosyl-L-methionine = a menaquinol + S-adenosyl-L-homocysteine + H(+). The catalysed reaction is a 2-methoxy-6-(all-trans-polyprenyl)benzene-1,4-diol + S-adenosyl-L-methionine = a 5-methoxy-2-methyl-3-(all-trans-polyprenyl)benzene-1,4-diol + S-adenosyl-L-homocysteine + H(+). Its pathway is quinol/quinone metabolism; menaquinone biosynthesis; menaquinol from 1,4-dihydroxy-2-naphthoate: step 2/2. It participates in cofactor biosynthesis; ubiquinone biosynthesis. In terms of biological role, methyltransferase required for the conversion of demethylmenaquinol (DMKH2) to menaquinol (MKH2) and the conversion of 2-polyprenyl-6-methoxy-1,4-benzoquinol (DDMQH2) to 2-polyprenyl-3-methyl-6-methoxy-1,4-benzoquinol (DMQH2). The sequence is that of Ubiquinone/menaquinone biosynthesis C-methyltransferase UbiE from Caulobacter vibrioides (strain ATCC 19089 / CIP 103742 / CB 15) (Caulobacter crescentus).